Here is a 593-residue protein sequence, read N- to C-terminus: Cryptochrome-2 (593 aa).

Residues 22–151 (ASSVHWFRKG…EVVTENSHTL (130 aa)) form the Photolyase/cryptochrome alpha/beta domain. Residue Lys30 forms a Glycyl lysine isopeptide (Lys-Gly) (interchain with G-Cter in ubiquitin) linkage. A Phosphoserine modification is found at Ser90. Glycyl lysine isopeptide (Lys-Gly) (interchain with G-Cter in ubiquitin) cross-links involve residues Lys126 and Lys242. Ser266 bears the Phosphoserine; by MAPK mark. Ser271 is an FAD binding site. A Phosphoserine modification is found at Ser299. Gln308 serves as a coordination point for FAD. Residue Lys348 forms a Glycyl lysine isopeptide (Lys-Gly) (interchain with G-Cter in ubiquitin) linkage. Residues His374 and 406–408 (DAD) contribute to the FAD site. Residues 390-489 (WVSWESGVRV…IIGVDYPRPI (100 aa)) form a required for inhibition of CLOCK-BMAL1-mediated transcription region. Residues Lys475 and Lys504 each participate in a glycyl lysine isopeptide (Lys-Gly) (interchain with G-Cter in ubiquitin) cross-link. The interval 532–593 (PVAEPSSSQA…PTPELPSKDA (62 aa)) is disordered. Low complexity predominate over residues 537 to 548 (SSSQAGSMSSAG). Phosphoserine; by GSK3-beta is present on Ser554. Ser558 carries the phosphoserine; by DYRK1A and MAPK modification.

Belongs to the DNA photolyase class-1 family. In terms of assembly, component of the circadian core oscillator, which includes the CRY proteins, CLOCK or NPAS2, BMAL1 or BMAL2, CSNK1D and/or CSNK1E, TIMELESS, and the PER proteins. Interacts with TIMELESS. Interacts directly with PER1, PER2 and PER3; interaction with PER2 inhibits its ubiquitination and vice versa. Interacts with CLOCK-BMAL1. Interacts with CLOCK. Interacts with BMAL1. Interacts with NFIL3. Interacts with FBXL3. Interacts with FBXL21. FBXL3, PER2 and the cofactor FAD compete for overlapping binding sites. FBXL3 cannot bind CRY2 that interacts already with PER2 or that contains bound FAD. Interacts with PPP5C (via TPR repeats); the interaction down-regulates the PPP5C phosphatase activity on CSNK1E. Interacts with nuclear receptors AR and NR3C1/GR; the interaction is ligand dependent. Interacts with PRKDC and CIART. Interacts with ISCA1 (in vitro). Interacts with DDB1, USP7 and TARDBP. Interacts with HNF4A. Interacts with PPARA. Interacts with PPARD (via domain NR LBD) and NR1I2 (via domain NR LBD) in a ligand-dependent manner. Interacts with PPARG, NR1I3 and VDR in a ligand-dependent manner. The cofactor is FAD. (6R)-5,10-methylene-5,6,7,8-tetrahydrofolate is required as a cofactor. In terms of processing, phosphorylation on Ser-266 by MAPK is important for the inhibition of CLOCK-BMAL1-mediated transcriptional activity. Phosphorylation by CSKNE requires interaction with PER1 or PER2. Phosphorylated in a circadian manner at Ser-554 and Ser-558 in the suprachiasmatic nucleus (SCN) and liver. Phosphorylation at Ser-558 by DYRK1A promotes subsequent phosphorylation at Ser-554 by GSK3-beta: the two-step phosphorylation at the neighboring Ser residues leads to its proteasomal degradation. Post-translationally, ubiquitinated by the SCF(FBXL3) and SCF(FBXL21) complexes, regulating the balance between degradation and stabilization. The SCF(FBXL3) complex is mainly nuclear and mediates ubiquitination and subsequent degradation of CRY2. In contrast, cytoplasmic SCF(FBXL21) complex-mediated ubiquitination leads to stabilize CRY2 and counteract the activity of the SCF(FBXL3) complex. The SCF(FBXL3) and SCF(FBXL21) complexes probably mediate ubiquitination at different Lys residues. The SCF(FBXL3) complex recognizes and binds CRY2 phosphorylated at Ser-554 and Ser-558. Ubiquitination may be inhibited by PER2. Deubiquitinated by USP7. As to expression, expressed in all tissues examined including fetal brain, fibroblasts, heart, brain, placenta, lung, liver, skeletal muscle, kidney, pancreas, spleen, thymus, prostate, testis, ovary, small intestine, colon and leukocytes. Highest levels in heart and skeletal muscle.

It is found in the cytoplasm. It localises to the nucleus. Its activity is regulated as follows. KL001 (N-[3-(9H-carbazol-9-yl)-2-hydroxypropyl]-N-(2-furanylmethyl)-methanesulfonamide) binds to CRY1 and stabilizes it by inhibiting FBXL3- and ubiquitin-dependent degradation of CRY1 resulting in lengthening of the circadian periods. In terms of biological role, transcriptional repressor which forms a core component of the circadian clock. The circadian clock, an internal time-keeping system, regulates various physiological processes through the generation of approximately 24 hour circadian rhythms in gene expression, which are translated into rhythms in metabolism and behavior. It is derived from the Latin roots 'circa' (about) and 'diem' (day) and acts as an important regulator of a wide array of physiological functions including metabolism, sleep, body temperature, blood pressure, endocrine, immune, cardiovascular, and renal function. Consists of two major components: the central clock, residing in the suprachiasmatic nucleus (SCN) of the brain, and the peripheral clocks that are present in nearly every tissue and organ system. Both the central and peripheral clocks can be reset by environmental cues, also known as Zeitgebers (German for 'timegivers'). The predominant Zeitgeber for the central clock is light, which is sensed by retina and signals directly to the SCN. The central clock entrains the peripheral clocks through neuronal and hormonal signals, body temperature and feeding-related cues, aligning all clocks with the external light/dark cycle. Circadian rhythms allow an organism to achieve temporal homeostasis with its environment at the molecular level by regulating gene expression to create a peak of protein expression once every 24 hours to control when a particular physiological process is most active with respect to the solar day. Transcription and translation of core clock components (CLOCK, NPAS2, BMAL1, BMAL2, PER1, PER2, PER3, CRY1 and CRY2) plays a critical role in rhythm generation, whereas delays imposed by post-translational modifications (PTMs) are important for determining the period (tau) of the rhythms (tau refers to the period of a rhythm and is the length, in time, of one complete cycle). A diurnal rhythm is synchronized with the day/night cycle, while the ultradian and infradian rhythms have a period shorter and longer than 24 hours, respectively. Disruptions in the circadian rhythms contribute to the pathology of cardiovascular diseases, cancer, metabolic syndromes and aging. A transcription/translation feedback loop (TTFL) forms the core of the molecular circadian clock mechanism. Transcription factors, CLOCK or NPAS2 and BMAL1 or BMAL2, form the positive limb of the feedback loop, act in the form of a heterodimer and activate the transcription of core clock genes and clock-controlled genes (involved in key metabolic processes), harboring E-box elements (5'-CACGTG-3') within their promoters. The core clock genes: PER1/2/3 and CRY1/2 which are transcriptional repressors form the negative limb of the feedback loop and interact with the CLOCK|NPAS2-BMAL1|BMAL2 heterodimer inhibiting its activity and thereby negatively regulating their own expression. This heterodimer also activates nuclear receptors NR1D1/2 and RORA/B/G, which form a second feedback loop and which activate and repress BMAL1 transcription, respectively. CRY1 and CRY2 have redundant functions but also differential and selective contributions at least in defining the pace of the SCN circadian clock and its circadian transcriptional outputs. Less potent transcriptional repressor in cerebellum and liver than CRY1, though less effective in lengthening the period of the SCN oscillator. Seems to play a critical role in tuning SCN circadian period by opposing the action of CRY1. With CRY1, dispensable for circadian rhythm generation but necessary for the development of intercellular networks for rhythm synchrony. May mediate circadian regulation of cAMP signaling and gluconeogenesis by blocking glucagon-mediated increases in intracellular cAMP concentrations and in CREB1 phosphorylation. Besides its role in the maintenance of the circadian clock, is also involved in the regulation of other processes. Plays a key role in glucose and lipid metabolism modulation, in part, through the transcriptional regulation of genes involved in these pathways, such as LEP or ACSL4. Represses glucocorticoid receptor NR3C1/GR-induced transcriptional activity by binding to glucocorticoid response elements (GREs). Represses the CLOCK-BMAL1 induced transcription of BHLHE40/DEC1. Represses the CLOCK-BMAL1 induced transcription of NAMPT. Represses PPARD and its target genes in the skeletal muscle and limits exercise capacity. Represses the transcriptional activity of NR1I2. The protein is Cryptochrome-2 (CRY2) of Homo sapiens (Human).